A 1269-amino-acid chain; its full sequence is Protein flightless-1 homolog (1269 aa).

M1 is modified (N-acetylmethionine). Positions 1–427 are interaction with LRRFIP1 and LRRFIP2; the sequence is MEATGVLPFV…SGPKDPMARK (427 aa). LRR repeat units follow at residues 7 to 32, 33 to 55, 56 to 78, 80 to 103, 104 to 126, 127 to 149, 150 to 173, 175 to 196, 197 to 222, 223 to 245, 247 to 268, 269 to 291, 293 to 316, 318 to 339, 340 to 363, and 365 to 385; these read LPFV…VKAM, TSLR…LAAL, QKLE…LSSL, SLRA…IFKL, DDLS…LENA, KNML…LFIN, LTDL…MRRL, HLQT…QLPA, MTAL…LEGL, SNLA…LYTL, SLRR…IDQW, VHVE…ICKL, KLKK…IGKL, NLEE…LCRC, PKLR…HFLT, and IEVL…PADR. K21 is modified (N6-acetyllysine). Residue S406 is modified to Phosphoserine. At S436 the chain carries Phosphoserine; by SGK3. The disordered stretch occupies residues 452 to 473; sequence VAQEKNKKQEESADARAPSGKV. A compositionally biased stretch (basic and acidic residues) spans 453–465; the sequence is AQEKNKKQEESAD. Positions 495 to 827 are interaction with ACTL6A; it reads VGQLPGLTIW…TVSRSLEGTE (333 aa). Gelsolin-like repeat units follow at residues 509 to 591, 629 to 703, and 758 to 831; these read FVPV…EEFL, NIKL…PEFW, and ELMP…AQVF. T818 is subject to Phosphothreonine; by SGK3. Phosphoserine occurs at positions 856 and 860. Residues 951-975 are disordered; it reads KKEDKEEKAEGKEGEEATAEAEEKQ. Residues 952-965 show a composition bias toward basic and acidic residues; that stretch reads KEDKEEKAEGKEGE. Residues 966–975 show a composition bias toward acidic residues; that stretch reads EATAEAEEKQ. 2 Gelsolin-like repeats span residues 1075–1143 and 1181–1254; these read TDSS…PENF and KCSD…QHAF.

Interacts with actin, ACTL6A, NCOA2 and CARM1. Interacts with LRRFIP1, LRRFIP2 and MYD88. Upon LPS stimulation, LRRFIP2 competes for MYD88-binding. LRRFIP1 constitutively blocks the interaction with MyD88, even in the absence of LPS. Interacts with the nuclear receptors ESR1 and THRB. Interacts with SGK3. Interacts (via the gelsolin-like region) with TMOD1. Interacts with (via the gelsolin-like region) TMOD3. Interacts with LMOD2, VCL, GSN and DES. In terms of tissue distribution, strongest expression in skeletal muscle with high expression also in the heart and lung.

The protein localises to the nucleus. Its subcellular location is the cytoplasm. The protein resides in the cytoskeleton. It is found in the microtubule organizing center. It localises to the centrosome. The protein localises to the cell projection. Its subcellular location is the podosome. The protein resides in the cell junction. It is found in the focal adhesion. In terms of biological role, is a regulator of actin polymerization, required for proper myofibril organization and regulation of the length of sarcomeric thin filaments. It also plays a role in the assembly of cardiomyocyte cell adhesion complexes. Regulates cytoskeletal rearrangements involved in cytokinesis and cell migration, by inhibiting Rac1-dependent paxillin phosphorylation. May play a role as coactivator in transcriptional activation by hormone-activated nuclear receptors (NR) and acts in cooperation with NCOA2 and CARM1. Involved in estrogen hormone signaling. This Homo sapiens (Human) protein is Protein flightless-1 homolog (FLII).